The chain runs to 73 residues: uncharacterized protein (73 aa).

This is an uncharacterized protein from Swinepox virus (strain Kasza) (SWPV).